Consider the following 598-residue polypeptide: Aspartate--tRNA(Asp/Asn) ligase (598 aa).

An L-aspartate-binding site is contributed by E177. An aspartate region spans residues 201 to 204; sequence QLFK. R223 is a binding site for L-aspartate. ATP is bound by residues 223–225 and Q232; that span reads RDE. H456 provides a ligand contact to L-aspartate. Residue E493 coordinates ATP. R500 serves as a coordination point for L-aspartate. Residue 545 to 548 participates in ATP binding; that stretch reads GLDR.

Belongs to the class-II aminoacyl-tRNA synthetase family. Type 1 subfamily. Homodimer.

Its subcellular location is the cytoplasm. It catalyses the reaction tRNA(Asx) + L-aspartate + ATP = L-aspartyl-tRNA(Asx) + AMP + diphosphate. In terms of biological role, aspartyl-tRNA synthetase with relaxed tRNA specificity since it is able to aspartylate not only its cognate tRNA(Asp) but also tRNA(Asn). Reaction proceeds in two steps: L-aspartate is first activated by ATP to form Asp-AMP and then transferred to the acceptor end of tRNA(Asp/Asn). The protein is Aspartate--tRNA(Asp/Asn) ligase of Prochlorococcus marinus (strain MIT 9215).